Here is a 281-residue protein sequence, read N- to C-terminus: Undecaprenyl-diphosphatase (281 aa).

A run of 7 helical transmembrane segments spans residues 4-24 (ILLL…FLPI), 46-63 (AFEV…CWEF), 83-103 (FVLN…LFGK), 108-128 (VLFS…IIFW), 187-207 (AVAT…ATAY), 222-242 (EFTL…FVCV), and 257-277 (FAWY…TGLI).

Belongs to the UppP family.

It localises to the cell inner membrane. The enzyme catalyses di-trans,octa-cis-undecaprenyl diphosphate + H2O = di-trans,octa-cis-undecaprenyl phosphate + phosphate + H(+). Its function is as follows. Catalyzes the dephosphorylation of undecaprenyl diphosphate (UPP). Confers resistance to bacitracin. The protein is Undecaprenyl-diphosphatase of Polynucleobacter necessarius subsp. necessarius (strain STIR1).